The primary structure comprises 150 residues: Small heat shock protein IbpB (150 aa).

The 112-residue stretch at 26 to 137 (SQEPIDFPPY…QPQRIAIGGG (112 aa)) folds into the sHSP domain.

This sequence belongs to the small heat shock protein (HSP20) family. As to quaternary structure, homodimer. Forms homomultimers of about 100-150 subunits at optimal growth temperatures. Conformation changes to oligomers at high temperatures or high ionic concentrations. The decrease in size of the multimers is accompanied by an increase in chaperone activity.

The protein resides in the cytoplasm. In terms of biological role, associates with aggregated proteins, together with IbpA, to stabilize and protect them from irreversible denaturation and extensive proteolysis during heat shock and oxidative stress. Aggregated proteins bound to the IbpAB complex are more efficiently refolded and reactivated by the ATP-dependent chaperone systems ClpB and DnaK/DnaJ/GrpE. Its activity is ATP-independent. The protein is Small heat shock protein IbpB of Pectobacterium atrosepticum (strain SCRI 1043 / ATCC BAA-672) (Erwinia carotovora subsp. atroseptica).